Here is a 121-residue protein sequence, read N- to C-terminus: Fluoride-specific ion channel FluC 2 (121 aa).

Transmembrane regions (helical) follow at residues 3–23 (YLFIFLGGAVGALLRYLLSFI), 31–51 (IGTFIANLCGAFLMGFLGTLA), 64–84 (GITTGFIGSLTTFSTFQFELV), and 92–112 (FILLIVYALTSYIFGILLCFL). 2 residues coordinate Na(+): Gly-71 and Thr-74.

Belongs to the fluoride channel Fluc/FEX (TC 1.A.43) family.

Its subcellular location is the cell membrane. It catalyses the reaction fluoride(in) = fluoride(out). Its activity is regulated as follows. Na(+) is not transported, but it plays an essential structural role and its presence is essential for fluoride channel function. Its function is as follows. Fluoride-specific ion channel. Important for reducing fluoride concentration in the cell, thus reducing its toxicity. This is Fluoride-specific ion channel FluC 2 from Staphylococcus saprophyticus subsp. saprophyticus (strain ATCC 15305 / DSM 20229 / NCIMB 8711 / NCTC 7292 / S-41).